A 96-amino-acid polypeptide reads, in one-letter code: Protein Vpr (96 aa).

The tract at residues 1 to 42 (MEQAPEDQGPQREPHNEWTLELLEELKNEAVRHFPRIWLHGL) is homooligomerization. Phosphoserine; by host is present on residues Ser-79, Ser-94, and Ser-96.

It belongs to the HIV-1 VPR protein family. In terms of assembly, homooligomer, may form homodimer. Interacts with p6-gag region of the Pr55 Gag precursor protein through a (Leu-X-X)4 motif near the C-terminus of the P6gag protein. Interacts with host UNG. May interact with host RAD23A/HHR23A. Interacts with host VPRBP/DCAF1, leading to hijack the CUL4A-RBX1-DDB1-DCAF1/VPRBP complex, mediating ubiquitination of host proteins such as TERT and ZGPAT and arrest of the cell cycle in G2 phase. Phosphorylated on several residues by host. These phosphorylations regulate VPR activity for the nuclear import of the HIV-1 pre-integration complex.

It is found in the virion. The protein resides in the host nucleus. The protein localises to the host extracellular space. Its function is as follows. During virus entry, plays a role in the transport of the viral pre-integration (PIC) complex to the host nucleus. This function is crucial for viral infection of non-dividing macrophages. May act directly at the nuclear pore complex, by binding nucleoporins phenylalanine-glycine (FG)-repeat regions. Functionally, during virus replication, may deplete host UNG protein, and incude G2-M cell cycle arrest. Acts by targeting specific host proteins for degradation by the 26S proteasome, through association with the cellular CUL4A-DDB1 E3 ligase complex by direct interaction with host VPRPB/DCAF-1. Cell cycle arrest reportedly occurs within hours of infection and is not blocked by antiviral agents, suggesting that it is initiated by the VPR carried into the virion. Additionally, VPR induces apoptosis in a cell cycle dependent manner suggesting that these two effects are mechanistically linked. Detected in the serum and cerebrospinal fluid of AIDS patient, VPR may also induce cell death to bystander cells. The sequence is that of Protein Vpr from Homo sapiens (Human).